The following is a 166-amino-acid chain: UPF0336 protein MT0525.1 (166 aa).

The 124-residue stretch at 8 to 131 (QTLIGKHYRA…VLAEIRSEVT (124 aa)) folds into the MaoC-like domain.

It belongs to the UPF0336 family.

The sequence is that of UPF0336 protein MT0525.1 from Mycobacterium tuberculosis (strain CDC 1551 / Oshkosh).